We begin with the raw amino-acid sequence, 145 residues long: MSITTEITAHYWAFAVFLLSALGLCVFMLTGGFLLGARARARSKNVPFESGIDPVGTARLRLSAKFYLVAMFFVIFDVETLYLYAWATAIREAGWVGFIEATIFILILLAGLVYLVRIGALDWTPERSRRLRRAGPIGETPRHQE.

The next 3 helical transmembrane spans lie at 14–34 (FAVFLLSALGLCVFMLTGGFL), 66–86 (FYLVAMFFVIFDVETLYLYAW), and 96–116 (VGFIEATIFILILLAGLVYLV).

The protein belongs to the complex I subunit 3 family. As to quaternary structure, NDH-1 is composed of 13 different subunits. Subunits NuoA, H, J, K, L, M, N constitute the membrane sector of the complex.

It localises to the cell inner membrane. It catalyses the reaction a quinone + NADH + 5 H(+)(in) = a quinol + NAD(+) + 4 H(+)(out). Its function is as follows. NDH-1 shuttles electrons from NADH, via FMN and iron-sulfur (Fe-S) centers, to quinones in the respiratory chain. The immediate electron acceptor for the enzyme in this species is believed to be ubiquinone. Couples the redox reaction to proton translocation (for every two electrons transferred, four hydrogen ions are translocated across the cytoplasmic membrane), and thus conserves the redox energy in a proton gradient. This chain is NADH-quinone oxidoreductase subunit A, found in Sodalis glossinidius (strain morsitans).